The following is a 284-amino-acid chain: 2-dehydro-3-deoxyphosphooctonate aldolase (284 aa).

This sequence belongs to the KdsA family.

It localises to the cytoplasm. It carries out the reaction D-arabinose 5-phosphate + phosphoenolpyruvate + H2O = 3-deoxy-alpha-D-manno-2-octulosonate-8-phosphate + phosphate. The protein operates within carbohydrate biosynthesis; 3-deoxy-D-manno-octulosonate biosynthesis; 3-deoxy-D-manno-octulosonate from D-ribulose 5-phosphate: step 2/3. It functions in the pathway bacterial outer membrane biogenesis; lipopolysaccharide biosynthesis. In Salmonella arizonae (strain ATCC BAA-731 / CDC346-86 / RSK2980), this protein is 2-dehydro-3-deoxyphosphooctonate aldolase.